Consider the following 273-residue polypeptide: 3-methyl-2-oxobutanoate hydroxymethyltransferase (273 aa).

The Mg(2+) site is built by D53 and D92. 3-methyl-2-oxobutanoate is bound by residues 53 to 54 (DS), D92, and K122. Mg(2+) is bound at residue E124. The active-site Proton acceptor is E191.

This sequence belongs to the PanB family. As to quaternary structure, homodecamer; pentamer of dimers. It depends on Mg(2+) as a cofactor.

It is found in the cytoplasm. The catalysed reaction is 3-methyl-2-oxobutanoate + (6R)-5,10-methylene-5,6,7,8-tetrahydrofolate + H2O = 2-dehydropantoate + (6S)-5,6,7,8-tetrahydrofolate. The protein operates within cofactor biosynthesis; (R)-pantothenate biosynthesis; (R)-pantoate from 3-methyl-2-oxobutanoate: step 1/2. Catalyzes the reversible reaction in which hydroxymethyl group from 5,10-methylenetetrahydrofolate is transferred onto alpha-ketoisovalerate to form ketopantoate. This Parabacteroides distasonis (strain ATCC 8503 / DSM 20701 / CIP 104284 / JCM 5825 / NCTC 11152) protein is 3-methyl-2-oxobutanoate hydroxymethyltransferase.